Reading from the N-terminus, the 62-residue chain is Kurtoxin-like I (62 aa).

One can recognise an LCN-type CS-alpha/beta domain in the interval 2–62 (IDGYPVDNWN…ARIKRGGRCN (61 aa)). Cystine bridges form between Cys12-Cys61, Cys16-Cys37, Cys23-Cys44, and Cys27-Cys46.

In terms of tissue distribution, expressed by the venom gland.

It localises to the secreted. This neurotoxin acts on sodium and calcium channels. Potently inhibits native voltage-gated T-type calcium channel activity in mouse male germ cells and weakly blocks Cav3.3/CACNA1I channels expressed in Xenopus oocytes. In addition, significantly slows the inactivation of activated recombinant sodium channels (Nav1.5/SCN5A). The sequence is that of Kurtoxin-like I from Parabuthus granulatus (Granulated thick-tailed scorpion).